The sequence spans 413 residues: MSSAKEQSSVTAALQPEQWTTSSNEALKLFVTNPEAALNFQPTFTYPIFGDAETIYGYKDLDIFLCFDHYTFKPFLNIKYSAKLTDDPEIIDIKKTIDEFLPKSTIFKDEVKWVDSIKEEKDNGYKIPGKLIDSFSENDKEYDIYKIDLKSDNGYELHQRLQILVLLFIEAGSFIDAKDELWNLYVLYEKDNKSTSNNEPSIVGFTTAYNYWKYPGAKKFDSTEQESRIKISQFIILPIYQGQGLGQLFYSHLFDKWLAQDDIIEVVVEDPNESFDDLRDRADLKRLNTSEQFDFKAVTPKVDKEWVEKTRRALKLEKRQFARLLEIILLYKLKHGYPGITKRDVRLFIKKRLYDKNKEGLATLDDNTKKDKLQTAYQALEDDYYRILGDLKLNIKRENDEEETDTVSKKQKV.

Interaction with histone H4 N-terminus regions lie at residues 51–53 (DAE) and 209–211 (YNY). Acetyl-CoA-binding positions include 234–236 (FII) and 241–247 (QGQGLGQ). E269 acts as the Proton donor/acceptor in catalysis.

Belongs to the HAT1 family. In terms of assembly, component of the HAT-B complex composed of at least HAT1 and HAT2. The HAT-B complex binds to histone H4 tail.

The protein resides in the cytoplasm. The protein localises to the nucleus. The catalysed reaction is L-lysyl-[protein] + acetyl-CoA = N(6)-acetyl-L-lysyl-[protein] + CoA + H(+). Functionally, catalytic component of the histone acetylase B (HAT-B) complex. Acetylates 'Lys-14' of histone H4 which is required for telomeric silencing. Has intrinsic substrate specificity that modifies lysine in recognition sequence GXGKXG. Involved in DNA double-strand break repair. The protein is Histone acetyltransferase type B catalytic subunit (HAT1) of Candida albicans (strain SC5314 / ATCC MYA-2876) (Yeast).